The sequence spans 218 residues: MAYPGKKSKSYETPKHPWQEARMATEVQLVKAYGLRNKKEVWKAASMLRMYRSEARKLLAHVASGQEGGLEGHYRTQSEEILSKLIRYGIIKSDANIDDILSLKTENILERRLQTQVLRLGLARTVIQARQFITHGHIAINGRKATIPGMLVSKEDEMHIGYYGNSPLKNESHPERPVQVASFLADSGTTLKAAAEAKQAREKPPERGGGRRKRGGRR.

The 65-residue stretch at 111–175 folds into the S4 RNA-binding domain; it reads RRLQTQVLRL…SPLKNESHPE (65 aa). Residues 192–218 are disordered; the sequence is KAAAEAKQAREKPPERGGGRRKRGGRR. Over residues 198 to 209 the composition is skewed to basic and acidic residues; sequence KQAREKPPERGG.

It belongs to the universal ribosomal protein uS4 family. As to quaternary structure, part of the 30S ribosomal subunit. Contacts protein S5. The interaction surface between S4 and S5 is involved in control of translational fidelity.

In terms of biological role, one of the primary rRNA binding proteins, it binds directly to 16S rRNA where it nucleates assembly of the body of the 30S subunit. Functionally, with S5 and S12 plays an important role in translational accuracy. The chain is Small ribosomal subunit protein uS4 from Methanosarcina acetivorans (strain ATCC 35395 / DSM 2834 / JCM 12185 / C2A).